A 1144-amino-acid polypeptide reads, in one-letter code: Guanine nucleotide-binding protein G(s) subunit alpha isoforms XLas (1144 aa).

4 disordered regions span residues Met-1 to Gly-186, Asp-316 to Gly-558, Ser-622 to Pro-657, and Arg-735 to Arg-772. Residues Leu-31–Ala-46 show a composition bias toward low complexity. The span at Lys-343–Ala-356 shows a compositional bias: basic and acidic residues. Positions Glu-358–Ala-369 are enriched in polar residues. The segment covering Glu-370–Glu-381 has biased composition (basic and acidic residues). Composition is skewed to low complexity over residues Pro-467–Ala-499 and Glu-518–Gly-558. Positions Pro-644–Ser-654 are enriched in pro residues. Residues Lys-743–Arg-767 are compositionally biased toward basic and acidic residues. A coiled-coil region spans residues Lys-745–Arg-772. One can recognise a G-alpha domain in the interval Cys-789–Leu-1144. The interval Arg-792–Thr-805 is G1 motif. Gly-797–Thr-805 is a binding site for GTP. Residue Ser-804 coordinates Mg(2+). Residues Phe-818 to Thr-840 form a disordered region. Residues Glu-837–Leu-863 are a coiled coil. A G2 motif region spans residues Asp-946–Thr-954. Residues Leu-947 to Thr-954, Asp-973 to Gln-977, and Asn-1042 to Asp-1045 each bind GTP. Residue Arg-951 is modified to ADP-ribosylarginine; by cholera toxin. A Mg(2+)-binding site is contributed by Thr-954. Residues Phe-969–Arg-978 are G3 motif. Positions Ile-1038–Asp-1045 are G4 motif. Ser-1102 is subject to Phosphoserine. The segment at Thr-1114 to Thr-1119 is G5 motif. Ala-1116 lines the GTP pocket.

The protein belongs to the G-alpha family. G(s) subfamily. G proteins are composed of 3 units; alpha, beta and gamma. The alpha chain contains the guanine nucleotide binding site. Interacts through its N-terminal region with ALEX which is produced from the same locus in a different open reading frame. This interaction may inhibit its adenylyl cyclase-stimulating activity. Interacts with MAGED2. In terms of tissue distribution, enriched in neuroendocrine tissues with a particularly high level of expression in pituitary where it is abundant in intermediate and anterior lobes. In adrenal gland, found in central region containing medullary chromaffin cells but not in cortex. In cerebellum, strongly expressed in perikarya of Purkinje cells. Not detected in liver, kidney or neurohypophysis.

Its subcellular location is the cell membrane. The protein localises to the apical cell membrane. Its function is as follows. Guanine nucleotide-binding proteins (G proteins) function as transducers in numerous signaling pathways controlled by G protein-coupled receptors (GPCRs). Signaling involves the activation of adenylyl cyclases, resulting in increased levels of the signaling molecule cAMP. GNAS functions downstream of several GPCRs, including beta-adrenergic receptors. XLas isoforms interact with the same set of receptors as Gnas isoforms. The protein is Guanine nucleotide-binding protein G(s) subunit alpha isoforms XLas of Rattus norvegicus (Rat).